The following is a 149-amino-acid chain: Large ribosomal subunit protein bL9 (149 aa).

It belongs to the bacterial ribosomal protein bL9 family.

In terms of biological role, binds to the 23S rRNA. This is Large ribosomal subunit protein bL9 from Haemophilus influenzae (strain PittGG).